A 482-amino-acid polypeptide reads, in one-letter code: Glycogen synthase (482 aa).

Residue Lys-15 coordinates ADP-alpha-D-glucose.

Belongs to the glycosyltransferase 1 family. Bacterial/plant glycogen synthase subfamily.

It carries out the reaction [(1-&gt;4)-alpha-D-glucosyl](n) + ADP-alpha-D-glucose = [(1-&gt;4)-alpha-D-glucosyl](n+1) + ADP + H(+). The protein operates within glycan biosynthesis; glycogen biosynthesis. Its function is as follows. Synthesizes alpha-1,4-glucan chains using ADP-glucose. This is Glycogen synthase from Hydrogenobaculum sp. (strain Y04AAS1).